We begin with the raw amino-acid sequence, 232 residues long: Ubiquinone biosynthesis O-methyltransferase (232 aa).

Arg36, Gly55, Asp76, and Leu120 together coordinate S-adenosyl-L-methionine.

The protein belongs to the methyltransferase superfamily. UbiG/COQ3 family.

The catalysed reaction is a 3-demethylubiquinol + S-adenosyl-L-methionine = a ubiquinol + S-adenosyl-L-homocysteine + H(+). The enzyme catalyses a 3-(all-trans-polyprenyl)benzene-1,2-diol + S-adenosyl-L-methionine = a 2-methoxy-6-(all-trans-polyprenyl)phenol + S-adenosyl-L-homocysteine + H(+). It participates in cofactor biosynthesis; ubiquinone biosynthesis. Functionally, O-methyltransferase that catalyzes the 2 O-methylation steps in the ubiquinone biosynthetic pathway. This is Ubiquinone biosynthesis O-methyltransferase from Stutzerimonas stutzeri (strain A1501) (Pseudomonas stutzeri).